The sequence spans 1271 residues: Breakpoint cluster region protein (1271 aa).

N-acetylmethionine is present on methionine 1. The interval 1-426 is kinase; that stretch reads MVDPVGFAEA…DGEGAFHGDA (426 aa). A coiled-coil region spans residues 28-55; sequence VGDIEQELERCKASIRRLEQEVNQERFR. The interval 67-173 is disordered; sequence KKSYDRQRWG…GHGQPGADAE (107 aa). A compositionally biased stretch (low complexity) spans 87 to 105; sequence ASEPRASASRPQPAPADGA. Serine 122 bears the Phosphoserine mark. Positions 123–138 are enriched in low complexity; that stretch reads PGKARPGTARRPGAAA. Serine 139 is modified (phosphoserine). Position 177 is a phosphotyrosine; by HCK (tyrosine 177). Residues 185 to 198 are compositionally biased toward basic and acidic residues; sequence ERGLVKVNDKEVSD. 3 disordered regions span residues 185–247, 286–392, and 416–476; these read ERGL…GDYE, GMME…HKRH, and NDGE…SRDA. The interval 197 to 385 is binding to ABL SH2-domain; that stretch reads SDRISSLGSQ…QSFDSSSPPT (189 aa). Polar residues predominate over residues 199 to 208; it reads RISSLGSQAM. 4 positions are modified to phosphoserine: serine 202, serine 215, serine 222, and serine 236. Residue tyrosine 246 is modified to Phosphotyrosine; by FES. 2 stretches are compositionally biased toward low complexity: residues 346–356 and 369–382; these read SSGQSSRVSPS and SPSQ…DSSS. Phosphoserine is present on residues serine 356, serine 377, and serine 382. Threonine 385 bears the Phosphothreonine mark. Residues 441-451 show a composition bias toward basic and acidic residues; sequence DRAEEQRRHQD. Phosphoserine is present on residues serine 459 and serine 463. Position 471 is an omega-N-methylarginine (arginine 471). Phosphoserine occurs at positions 473 and 488. The region spanning 498 to 691 is the DH domain; the sequence is MRKWVLSGIL…QNFLSSINEE (194 aa). Position 554 is a phosphotyrosine (tyrosine 554). Threonine 641 carries the post-translational modification Phosphothreonine. Tyrosine 644 carries the phosphotyrosine modification. Threonine 693 is subject to Phosphothreonine. A PH domain is found at 708 to 866; that stretch reads QLLKDSFMVE…WRENIREQQK (159 aa). Residues 893-1020 form the C2 domain; the sequence is HSIPLTINKE…QDRDWQRTVI (128 aa). The residue at position 894 (serine 894) is a Phosphoserine. The Rho-GAP domain maps to 1054–1248; the sequence is VKIAVVTKRE…VMSQVQVLLY (195 aa). Serine 1264 is modified (phosphoserine).

Homotetramer. Interacts with PDZK1. May interact with CCPG1. Interacts with FES/FPS, ABL1, PIK3R1 and GRB2. Interacts with HCK. Interacts with SH2D5. Interacts with DLG4. Post-translationally, autophosphorylated. Phosphorylated by FES/FPS on tyrosine residues, leading to down-regulation of the BCR kinase activity. Phosphorylation at Tyr-177 by HCK is important for interaction with GRB2.

It localises to the postsynaptic density. The protein resides in the cell projection. Its subcellular location is the dendritic spine. The protein localises to the axon. It is found in the synapse. It carries out the reaction L-seryl-[protein] + ATP = O-phospho-L-seryl-[protein] + ADP + H(+). The enzyme catalyses L-threonyl-[protein] + ATP = O-phospho-L-threonyl-[protein] + ADP + H(+). Protein with a unique structure having two opposing regulatory activities toward small GTP-binding proteins. The C-terminus is a GTPase-activating protein (GAP) domain which stimulates GTP hydrolysis by RAC1, RAC2 and CDC42. Accelerates the intrinsic rate of GTP hydrolysis of RAC1 or CDC42, leading to down-regulation of the active GTP-bound form. The central Dbl homology (DH) domain functions as guanine nucleotide exchange factor (GEF) that modulates the GTPases CDC42, RHOA and RAC1. Promotes the conversion of CDC42, RHOA and RAC1 from the GDP-bound to the GTP-bound form. The amino terminus contains an intrinsic kinase activity. Functions as an important negative regulator of neuronal RAC1 activity. Regulates macrophage functions such as CSF1-directed motility and phagocytosis through the modulation of RAC1 activity. Plays a major role as a RHOA GEF in keratinocytes being involved in focal adhesion formation and keratinocyte differentiation. This is Breakpoint cluster region protein from Homo sapiens (Human).